The following is a 511-amino-acid chain: Zinc finger and BTB domain-containing protein 45 (511 aa).

Residues 33-96 (CDVTVRIREA…LYSGSLVVAQ (64 aa)) enclose the BTB domain. Residues 159 to 168 (ARPPGHPGAA) are compositionally biased toward low complexity. Disordered regions lie at residues 159–241 (ARPP…PDCA) and 294–403 (EDGA…PPTY). Positions 206–224 (RGDEDDEESDDETDGEDGE) are enriched in acidic residues. The span at 339–360 (PGPPAPPPSAPSGPAPAPPPAF) shows a compositional bias: pro residues. A compositionally biased stretch (low complexity) spans 378-397 (PAPSAAPTTAPSGTPARTPG). 4 consecutive C2H2-type zinc fingers follow at residues 403–425 (YECS…MFIH), 431–453 (HQCA…MVTH), 459–481 (FQCA…MRTH), and 486–508 (APCP…LAAH).

It belongs to the krueppel C2H2-type zinc-finger protein family.

The protein localises to the nucleus. Its function is as follows. May be involved in transcriptional regulation. In the central nervous system, may play a role in glial cell differentiation. This Homo sapiens (Human) protein is Zinc finger and BTB domain-containing protein 45 (ZBTB45).